Here is a 607-residue protein sequence, read N- to C-terminus: Arginine decarboxylase (607 aa).

Residue Lys-104 is modified to N6-(pyridoxal phosphate)lysine. 290 to 300 serves as a coordination point for substrate; that stretch reads LDCGGGLGVDY.

This sequence belongs to the Orn/Lys/Arg decarboxylase class-II family. SpeA subfamily. It depends on pyridoxal 5'-phosphate as a cofactor. Mg(2+) is required as a cofactor.

It carries out the reaction L-arginine + H(+) = agmatine + CO2. It functions in the pathway amine and polyamine biosynthesis; agmatine biosynthesis; agmatine from L-arginine: step 1/1. This chain is Arginine decarboxylase (SPE1), found in Avena sativa (Oat).